Here is a 275-residue protein sequence, read N- to C-terminus: Vitamin B12-binding protein (275 aa).

Positions 1–19 (MMNKICLYLPLFFSSLTMA) are cleaved as a signal peptide. The region spanning 25–272 (RVISLAPHAT…EVCEHFESVK (248 aa)) is the Fe/B12 periplasmic-binding domain. A disulfide bridge connects residues Cys185 and Cys265.

It belongs to the BtuF family. As to quaternary structure, the complex is composed of two ATP-binding proteins (BtuD), two transmembrane proteins (BtuC) and a solute-binding protein (BtuF).

It is found in the periplasm. In terms of biological role, part of the ABC transporter complex BtuCDF involved in vitamin B12 import. Binds vitamin B12 and delivers it to the periplasmic surface of BtuC. In Vibrio parahaemolyticus serotype O3:K6 (strain RIMD 2210633), this protein is Vitamin B12-binding protein.